We begin with the raw amino-acid sequence, 1046 residues long: UDP-N-acetylglucosamine--peptide N-acetylglucosaminyltransferase 110 kDa subunit (1046 aa).

Residue alanine 2 is modified to N-acetylalanine. A phosphoserine; by GSK3-beta; alternate mark is found at serine 3 and serine 4. Serine 3 and serine 4 each carry an O-linked (GlcNAc) serine; alternate glycan. Phosphoserine is present on serine 20. 12 TPR repeats span residues 21-54, 89-122, 123-156, 157-190, 191-224, 225-258, 259-292, 293-326, 327-360, 361-394, 395-428, and 429-462; these read FQGL…EPDN, AEAY…KPDF, IDGY…NPDL, YCVR…QPNF, AVAW…DPNF, LDAY…SPNH, AVVH…QPHF, PDAY…CPTH, ADSL…FPEF, AAAH…SPTF, ADAY…NPAF, and ADAH…KPDF. An O-linked (GlcNAc) serine; by autocatalysis glycan is attached at serine 399. A Phosphothreonine modification is found at threonine 454. One copy of the TPR 13; truncated repeat lies at 463–473; that stretch reads PDAYCNLAHCL. The short motif at 464 to 466 is the DFP motif element; the sequence is DAY. Residues 487–503 carry the Nuclear localization signal motif; the sequence is KKLVSIVADQLEKNRLP. Histidine 508 functions as the Proton acceptor in the catalytic mechanism. Residues glutamine 849, lysine 852, 906 to 908, 911 to 914, 930 to 932, and aspartate 935 contribute to the UDP site; these read APK, HVRR, and HTT. Residue tyrosine 989 is modified to Phosphotyrosine. The segment at 991-1010 is required for phosphatidylinositol 3,4,5-triphosphate binding; that stretch reads KKIRGKVWKQRISSPLFNTK.

This sequence belongs to the glycosyltransferase 41 family. O-GlcNAc transferase subfamily. Monomer; may exist in different oligomerization states in cells. Homotrimer, oligomerizes via TPR repeats 6 and 7. Trimerization is not necessary for activity in vitro, however it increases affinity for UDP-GlcNAc. Component of a THAP1/THAP3-HCFC1-OGT complex. Component of the NSL complex at least composed of MOF/KAT8, KANSL1, KANSL2, KANSL3, MCRS1, PHF20, OGT1/OGT, WDR5 and HCFC1. Found in a complex with KIF5B, RHOT1, RHOT2 and TRAK1. Found in a complex composed of at least SINHCAF, SIN3A, HDAC1, SAP30, RBBP4, OGT and TET1. Component of a complex composed of KMT2E/MLL5, OGT and USP7; the complex stabilizes KMT2E/MLL5, preventing KMT2E/MLL5 ubiquitination and proteasomal-mediated degradation. Interacts (via TPRs 1-6) with SIN3A; the interaction mediates transcriptional repression in parallel with histone deacetylase. Interacts (via TPR 5-6) with TET1, TET2 and TET3. Interacts (via TPR repeats 6 and 7) with ATXN10. Interacts with NSD2. Interacts with PROSER1; this interaction mediates TET2 O-GlcNAcylation and stability by promoting the interaction between OGT and TET2. Ubiquitinated by the SCF(FBXO31) complex, leading to its proteasomal degradation. Post-translationally, phosphorylation on Ser-3 or Ser-4 by GSK3-beta positively regulates its activity. Phosphorylation at Thr-454 by AMPK promotes nuclear localization. In terms of processing, glycosylated via autocatalysis; O-GlcNAcylation at Ser-399 promotes nuclear localization.

It localises to the nucleus. The protein resides in the cytoplasm. The catalysed reaction is L-seryl-[protein] + UDP-N-acetyl-alpha-D-glucosamine = 3-O-(N-acetyl-beta-D-glucosaminyl)-L-seryl-[protein] + UDP + H(+). It carries out the reaction L-threonyl-[protein] + UDP-N-acetyl-alpha-D-glucosamine = 3-O-(N-acetyl-beta-D-glucosaminyl)-L-threonyl-[protein] + UDP + H(+). It participates in protein modification; protein glycosylation. With respect to regulation, inhibited by UDP. In terms of biological role, catalyzes the transfer of a single N-acetylglucosamine from UDP-GlcNAc to a serine or threonine residue in cytoplasmic and nuclear proteins resulting in their modification with a beta-linked N-acetylglucosamine (O-GlcNAc). Glycosylates a large and diverse number of proteins including histone H2B, AKT1, AMPK, ATG4B, CAPRIN1, EZH2, FNIP1, GSDMD, KRT7, LMNA, LMNB1, LMNB2, RPTOR, HOXA1, PFKL, KMT2E/MLL5, MAPT/TAU, TET2, RBL2, RET, NOD2 and HCFC1. Can regulate their cellular processes via cross-talk between glycosylation and phosphorylation or by affecting proteolytic processing. Involved in insulin resistance in muscle and adipocyte cells via glycosylating insulin signaling components and inhibiting the 'Thr-308' phosphorylation of AKT1, enhancing IRS1 phosphorylation and attenuating insulin signaling. Involved in glycolysis regulation by mediating glycosylation of 6-phosphofructokinase PFKL, inhibiting its activity. Plays a key role in chromatin structure by mediating O-GlcNAcylation of 'Ser-112' of histone H2B: recruited to CpG-rich transcription start sites of active genes via its interaction with TET proteins (TET1, TET2 or TET3). As part of the NSL complex indirectly involved in acetylation of nucleosomal histone H4 on several lysine residues. O-GlcNAcylation of 'Ser-75' of EZH2 increases its stability, and facilitating the formation of H3K27me3 by the PRC2/EED-EZH2 complex. Stabilizes KMT2E/MLL5 by mediating its glycosylation, thereby preventing KMT2E/MLL5 ubiquitination. Regulates circadian oscillation of the clock genes and glucose homeostasis in the liver. Stabilizes clock proteins BMAL1 and CLOCK through O-glycosylation, which prevents their ubiquitination and subsequent degradation. Promotes the CLOCK-BMAL1-mediated transcription of genes in the negative loop of the circadian clock such as PER1/2 and CRY1/2. O-glycosylates HCFC1 and regulates its proteolytic processing and transcriptional activity. Component of a THAP1/THAP3-HCFC1-OGT complex that is required for the regulation of the transcriptional activity of RRM1. Regulates mitochondrial motility in neurons by mediating glycosylation of TRAK1. Promotes autophagy by mediating O-glycosylation of ATG4B. Acts as a regulator of mTORC1 signaling by mediating O-glycosylation of RPTOR and FNIP1: O-GlcNAcylation of RPTOR in response to glucose sufficiency promotes activation of the mTORC1 complex. Its function is as follows. Catalyzes the transfer of a single N-acetylglucosamine from UDP-GlcNAc to a serine or threonine residue. Acts on cytoplasmic and nuclear proteins resulting in their modification with a beta-linked N-acetylglucosamine (O-GlcNAc). Glycosylates a large and diverse number of proteins including histone H2B, AKT1, ATG4B, EZH2, PFKL, KMT2E/MLL5, MAPT/TAU, NOD2 and HCFC1. Can regulate their cellular processes via cross-talk between glycosylation and phosphorylation or by affecting proteolytic processing. Probably by glycosylating KMT2E/MLL5, stabilizes KMT2E/MLL5 by preventing its ubiquitination. Involved in insulin resistance in muscle and adipocyte cells via glycosylating insulin signaling components and inhibiting the 'Thr-308' phosphorylation of AKT1, enhancing IRS1 phosphorylation and attenuating insulin signaling. Involved in glycolysis regulation by mediating glycosylation of 6-phosphofructokinase PFKL, inhibiting its activity. Component of a THAP1/THAP3-HCFC1-OGT complex that is required for the regulation of the transcriptional activity of RRM1. Plays a key role in chromatin structure by mediating O-GlcNAcylation of 'Ser-112' of histone H2B: recruited to CpG-rich transcription start sites of active genes via its interaction with TET proteins (TET1, TET2 or TET3). As part of the NSL complex indirectly involved in acetylation of nucleosomal histone H4 on several lysine residues. O-GlcNAcylation of 'Ser-75' of EZH2 increases its stability, and facilitating the formation of H3K27me3 by the PRC2/EED-EZH2 complex. Regulates circadian oscillation of the clock genes and glucose homeostasis in the liver. Stabilizes clock proteins BMAL1 and CLOCK through O-glycosylation, which prevents their ubiquitination and subsequent degradation. Promotes the CLOCK-BMAL1-mediated transcription of genes in the negative loop of the circadian clock such as PER1/2 and CRY1/2. O-glycosylates HCFC1 and regulates its proteolytic processing and transcriptional activity. Regulates mitochondrial motility in neurons by mediating glycosylation of TRAK1. Glycosylates HOXA1. O-glycosylates FNIP1. Promotes autophagy by mediating O-glycosylation of ATG4B. This is UDP-N-acetylglucosamine--peptide N-acetylglucosaminyltransferase 110 kDa subunit (OGT) from Oryctolagus cuniculus (Rabbit).